The following is a 674-amino-acid chain: Fidgetin-like protein 1 (674 aa).

The tract at residues 157–179 (SQESDSLPNSAHDRDRTQDFPES) is disordered. The segment covering 167 to 179 (AHDRDRTQDFPES) has biased composition (basic and acidic residues). K225 participates in a covalent cross-link: Glycyl lysine isopeptide (Lys-Gly) (interchain with G-Cter in SUMO2). The residue at position 259 (S259) is a Phosphoserine. The necessary and sufficient for interaction with RAD51 stretch occupies residues 295–344 (FKTAKEQLWVDQQKKYHQPQRASGSSYGGVKKSLGASRSRGILGKFVPPI). The residue at position 339 (K339) is an N6-acetyllysine. Residues A404 and 444 to 449 (GTGKTL) contribute to the ATP site.

It belongs to the AAA ATPase family. As to quaternary structure, hexamer. Interacts (via N-terminal one-half region) with RAD51; the interaction is direct. Interacts (via N-terminal one-half region) with SPIDR (via the C-terminal region); the interaction is direct. Interacts with FIRRM; may regulate homologous recombination. Mg(2+) is required as a cofactor.

Its subcellular location is the nucleus. It localises to the cytoplasm. The protein resides in the perinuclear region. The catalysed reaction is ATP + H2O = ADP + phosphate + H(+). Involved in DNA double-strand break (DBS) repair via homologous recombination (HR). Recruited at DSB sites independently of BRCA2, RAD51 and RAD51 paralogs in a H2AX-dependent manner. May regulate osteoblast proliferation and differentiation. May play a role in the control of male meiosis dynamic. In Homo sapiens (Human), this protein is Fidgetin-like protein 1 (FIGNL1).